Reading from the N-terminus, the 446-residue chain is Probable glycine dehydrogenase (decarboxylating) subunit 1 (446 aa).

It belongs to the GcvP family. N-terminal subunit subfamily. In terms of assembly, the glycine cleavage system is composed of four proteins: P, T, L and H. In this organism, the P 'protein' is a heterodimer of two subunits.

The catalysed reaction is N(6)-[(R)-lipoyl]-L-lysyl-[glycine-cleavage complex H protein] + glycine + H(+) = N(6)-[(R)-S(8)-aminomethyldihydrolipoyl]-L-lysyl-[glycine-cleavage complex H protein] + CO2. In terms of biological role, the glycine cleavage system catalyzes the degradation of glycine. The P protein binds the alpha-amino group of glycine through its pyridoxal phosphate cofactor; CO(2) is released and the remaining methylamine moiety is then transferred to the lipoamide cofactor of the H protein. This Thermococcus onnurineus (strain NA1) protein is Probable glycine dehydrogenase (decarboxylating) subunit 1.